A 431-amino-acid chain; its full sequence is MKILDWSQLDGAAQTDALTRPVQTVAARTRDAVAALIADVRTRGDAALREITAHFDGVSLDSFAVSEAEFAAAEAAVPPELRQAMQDAVARIDTFHRAGMSGGYAVETAPGVVCEKIVRPIGRVGLYVPAGSAPLPSTALMLGVPARLAGCREVVLCTPPRKDGSVDPAVLVAARLTGVRRVFKLGGAQAIAAMAYGTESLPSCDKLFGPGNSYVTEAKQQVAQSGAAAIDMPAGPSEVLVIADAGAQPAFVAADLLSQAEHGPDSQVLLLSDSDALIGAVRAQLEVQLAQLSRADIARQALAQSRLIKVQTLDEAFAISNRYAPEHLILALREPRGWLAQVEAAGSVFLGDYTPEALGDYCSGTNHVLPTSGAARAYSGVSVASFQNMVSVQAASKAGIDGIGACALVLARAEGLDAHANAVALRMGVAA.

Residues Y127, Q189, and N212 each contribute to the NAD(+) site. Substrate-binding residues include S237, Q259, and H262. Positions 259 and 262 each coordinate Zn(2+). Catalysis depends on proton acceptor residues E326 and H327. 4 residues coordinate substrate: H327, D360, E414, and H419. D360 provides a ligand contact to Zn(2+). H419 lines the Zn(2+) pocket.

The protein belongs to the histidinol dehydrogenase family. Requires Zn(2+) as cofactor.

The catalysed reaction is L-histidinol + 2 NAD(+) + H2O = L-histidine + 2 NADH + 3 H(+). It functions in the pathway amino-acid biosynthesis; L-histidine biosynthesis; L-histidine from 5-phospho-alpha-D-ribose 1-diphosphate: step 9/9. Its function is as follows. Catalyzes the sequential NAD-dependent oxidations of L-histidinol to L-histidinaldehyde and then to L-histidine. The polypeptide is Histidinol dehydrogenase (Xanthomonas axonopodis pv. citri (strain 306)).